A 764-amino-acid polypeptide reads, in one-letter code: FAST kinase domain-containing protein 5, mitochondrial (764 aa).

The transit peptide at methionine 1 to serine 27 directs the protein to the mitochondrion. Residues isoleucine 68–glycine 94 form a disordered region. Residues serine 81–leucine 93 are compositionally biased toward polar residues. A Phosphoserine modification is found at serine 95. Residue lysine 507 is modified to N6-acetyllysine. The RAP domain occupies leucine 697–glutamate 757.

It belongs to the FAST kinase family. Found in a complex with GRSF1, DDX28, DHX30 and FASTKD2. Associates with the 12S mitochondrial rRNA (12S mt-rRNA).

It localises to the mitochondrion matrix. The protein resides in the mitochondrion nucleoid. Plays an important role in the processing of non-canonical mitochondrial mRNA precursors. This chain is FAST kinase domain-containing protein 5, mitochondrial (FASTKD5), found in Pongo abelii (Sumatran orangutan).